The chain runs to 875 residues: Leucine--tRNA ligase (875 aa).

Residues 43-53 carry the 'HIGH' region motif; it reads PYPSGRIHIGH. Residues 631-635 carry the 'KMSKS' region motif; that stretch reads KMSKS. Residue K634 participates in ATP binding.

This sequence belongs to the class-I aminoacyl-tRNA synthetase family.

It is found in the cytoplasm. It carries out the reaction tRNA(Leu) + L-leucine + ATP = L-leucyl-tRNA(Leu) + AMP + diphosphate. This chain is Leucine--tRNA ligase, found in Mesorhizobium japonicum (strain LMG 29417 / CECT 9101 / MAFF 303099) (Mesorhizobium loti (strain MAFF 303099)).